A 190-amino-acid chain; its full sequence is Adenine phosphoribosyltransferase (190 aa).

This sequence belongs to the purine/pyrimidine phosphoribosyltransferase family. As to quaternary structure, homodimer.

Its subcellular location is the cytoplasm. It carries out the reaction AMP + diphosphate = 5-phospho-alpha-D-ribose 1-diphosphate + adenine. Its pathway is purine metabolism; AMP biosynthesis via salvage pathway; AMP from adenine: step 1/1. Catalyzes a salvage reaction resulting in the formation of AMP, that is energically less costly than de novo synthesis. The chain is Adenine phosphoribosyltransferase from Treponema pallidum (strain Nichols).